A 467-amino-acid polypeptide reads, in one-letter code: ATP synthase subunit beta (467 aa).

152–159 (GGAGVGKT) is an ATP binding site.

Belongs to the ATPase alpha/beta chains family. F-type ATPases have 2 components, CF(1) - the catalytic core - and CF(0) - the membrane proton channel. CF(1) has five subunits: alpha(3), beta(3), gamma(1), delta(1), epsilon(1). CF(0) has three main subunits: a(1), b(2) and c(9-12). The alpha and beta chains form an alternating ring which encloses part of the gamma chain. CF(1) is attached to CF(0) by a central stalk formed by the gamma and epsilon chains, while a peripheral stalk is formed by the delta and b chains.

It localises to the cell inner membrane. The enzyme catalyses ATP + H2O + 4 H(+)(in) = ADP + phosphate + 5 H(+)(out). In terms of biological role, produces ATP from ADP in the presence of a proton gradient across the membrane. The catalytic sites are hosted primarily by the beta subunits. The polypeptide is ATP synthase subunit beta (Wolinella succinogenes (strain ATCC 29543 / DSM 1740 / CCUG 13145 / JCM 31913 / LMG 7466 / NCTC 11488 / FDC 602W) (Vibrio succinogenes)).